Consider the following 153-residue polypeptide: NAD(P)H-quinone oxidoreductase subunit N (153 aa).

Belongs to the complex I NdhN subunit family. As to quaternary structure, NDH-1 can be composed of about 15 different subunits; different subcomplexes with different compositions have been identified which probably have different functions.

Its subcellular location is the cellular thylakoid membrane. The catalysed reaction is a plastoquinone + NADH + (n+1) H(+)(in) = a plastoquinol + NAD(+) + n H(+)(out). The enzyme catalyses a plastoquinone + NADPH + (n+1) H(+)(in) = a plastoquinol + NADP(+) + n H(+)(out). In terms of biological role, NDH-1 shuttles electrons from an unknown electron donor, via FMN and iron-sulfur (Fe-S) centers, to quinones in the respiratory and/or the photosynthetic chain. The immediate electron acceptor for the enzyme in this species is believed to be plastoquinone. Couples the redox reaction to proton translocation, and thus conserves the redox energy in a proton gradient. Cyanobacterial NDH-1 also plays a role in inorganic carbon-concentration. This chain is NAD(P)H-quinone oxidoreductase subunit N, found in Synechococcus sp. (strain CC9605).